We begin with the raw amino-acid sequence, 151 residues long: CD-NTase-associated protein 19 (151 aa).

The next 3 helical transmembrane spans lie at 25–45, 52–72, and 127–147; these read TVFNFYIAITGLLAAGIGVTL, VLFTSLMGVFVAFISFIFWKL, and ISFVIVGFTGILLAITPFLMK.

This sequence belongs to the Cap19 family.

It localises to the cell inner membrane. In terms of biological role, membrane protein component of a CBASS (cyclic oligonucleotide-based antiphage signaling system) which provides immunity against bacteriophage. The CD-NTase protein synthesizes cyclic nucleotides in response to infection; these serve as specific second messenger signals. The signals activate a diverse range of effectors, leading to bacterial cell death and thus abortive phage infection. A type III CBASS system. Expression of this CBASS system (Cap17-CapW-CdnC-Cap7-Cap6-Cap18-Cap19) in a susceptible E.coli (strain JP313) confers resistance to bacteriophage lambda cI-. This is CD-NTase-associated protein 19 from Escherichia coli.